Consider the following 415-residue polypeptide: Homoserine O-acetyltransferase (415 aa).

One can recognise an AB hydrolase-1 domain in the interval 47 to 369; the sequence is NAVLVCHGLT…HGHDAFLVEP (323 aa). Ser155 (nucleophile) is an active-site residue. Residue Arg226 coordinates substrate. Residues Asp329 and His362 contribute to the active site. Residue Asp363 participates in substrate binding. Residues 387-415 are disordered; sequence RAVTDTATDGGEPDEEKDFAPVHSSLFSR.

It belongs to the AB hydrolase superfamily. MetX family. Homodimer.

It localises to the cytoplasm. The catalysed reaction is L-homoserine + acetyl-CoA = O-acetyl-L-homoserine + CoA. The protein operates within amino-acid biosynthesis; L-methionine biosynthesis via de novo pathway; O-acetyl-L-homoserine from L-homoserine: step 1/1. Its function is as follows. Transfers an acetyl group from acetyl-CoA to L-homoserine, forming acetyl-L-homoserine. The chain is Homoserine O-acetyltransferase from Haloferax gibbonsii (strain ATCC 33959 / DSM 4427 / JCM 8863 / NBRC 102184 / NCIMB 2188 / Ma 2.38).